Consider the following 509-residue polypeptide: Cardiolipin synthase 1 (509 aa).

Helical transmembrane passes span 4 to 24, 30 to 50, and 59 to 79; these read PIVQ…LLNT, YTFV…VIFI, and LAWF…YAIF. PLD phosphodiesterase domains are found at residues 238-265 and 422-449; these read VNYR…GDEY and KDGF…DVRS. Active-site residues include H243, K245, D250, H427, K429, and D434.

The protein belongs to the phospholipase D family. Cardiolipin synthase subfamily.

It localises to the cell membrane. The enzyme catalyses 2 a 1,2-diacyl-sn-glycero-3-phospho-(1'-sn-glycerol) = a cardiolipin + glycerol. Catalyzes the reversible phosphatidyl group transfer from one phosphatidylglycerol molecule to another to form cardiolipin (CL) (diphosphatidylglycerol) and glycerol. The sequence is that of Cardiolipin synthase 1 (cls1) from Bacillus cereus (strain ATCC 14579 / DSM 31 / CCUG 7414 / JCM 2152 / NBRC 15305 / NCIMB 9373 / NCTC 2599 / NRRL B-3711).